Reading from the N-terminus, the 492-residue chain is MVSWIRKNLLLVLTVSSVVLGALCGFLLRGLQLSPQNIMYISFPGELLMHMLKMMILPLIMSSLISGLAQLDARQSGKLGSLAVTYYMFTTAVAVVTGIFLVLVIHPGDPTIKKEIGTGTEGKTVSTVDTLLDLLRNMFPENVVQATFQQVQTKYIKVRPKVVKNNDSATLAALNNGSLDYVKASVEYTSGMNVLGVIVFCIAIGISLSQLGQEAHVMVQFFVIMDKVIMKLVMTVMWYSPFGILCLIMGKILEIHDLADTARMLAMYMVTVLSGLAIHSLISLPLIFFVTTKKNPYVFMRGLFQAWITGLGTASSSDTLPITYICLEENLGVDRRVTRFVLPVGATINMDGTALYEAVAAIFIAQINGVHLSFGQVVTVSLTATLASIGAASVPSAGLVTMLLVLTAVGLPVKDVSLIVAVDWLLDRIRTSINVLGDAMGAGIVYHYSKADLDAHDRLAATTRSHSIAMNDEKRQLAVYNSLPTDDEKHTH.

Residues Met1–Lys7 are Cytoplasmic-facing. The next 3 membrane-spanning stretches (helical) occupy residues Asn8–Leu28, Leu47–Gly67, and Thr85–Ile105. Residues His106–Gly191 lie on the Extracellular side of the membrane. Asn166 and Asn176 each carry an N-linked (GlcNAc...) asparagine glycan. 5 helical membrane passes run Met192–Gly212, Val228–Ile248, Val270–Val290, Ala358–Val378, and Ile389–Val409.

It belongs to the dicarboxylate/amino acid:cation symporter (DAACS) (TC 2.A.23) family.

It localises to the membrane. Its function is as follows. Transports L-glutamate and also L- and D-aspartate. Essential for terminating the postsynaptic action of glutamate by rapidly removing released glutamate from the synaptic cleft. Acts as a symport by cotransporting sodium. This Onchocerca volvulus protein is Excitatory amino acid transporter (GLT-1).